Here is a 669-residue protein sequence, read N- to C-terminus: DNA mismatch repair protein MutL (669 aa).

The disordered stretch occupies residues 361–409; it reads ENVFSQPYQAPVTSSTQKKSTGAYQGSAGKGLTDTQKSPQKTLDTRQFG. Polar residues-rich tracts occupy residues 363 to 384 and 393 to 402; these read VFSQ…TGAY and TDTQKSPQKT.

It belongs to the DNA mismatch repair MutL/HexB family.

Its function is as follows. This protein is involved in the repair of mismatches in DNA. It is required for dam-dependent methyl-directed DNA mismatch repair. May act as a 'molecular matchmaker', a protein that promotes the formation of a stable complex between two or more DNA-binding proteins in an ATP-dependent manner without itself being part of a final effector complex. In Proteus mirabilis (strain HI4320), this protein is DNA mismatch repair protein MutL.